The chain runs to 323 residues: MKRLNSQLQEDGAPMELILLLRTLLAGCKEISFRVSQGALAGVLGSTLSENVQGETQKKLDVISNQILKDILSESGYVKAISSEEEDDVVACNPNGNYLVSFDPLDGSSNTDINSLIGTIFSITHAPQWMDADDPSAFLQPGTQIVAAGYVLYGPSAMLALSTGRGTHLYTLDKTHGGFLLTQKNIQVPAQTSEFAINASNQRHWEDPVQNYIGDLIAGEDGPREKDFNMRWVAAMVGDIHRVLSRGGIFMYPFDRRNPEMPGKLRLLYEANPMAFLMEQAGGLASTGQGRILEVMPTEIHQRVPVILGSKEEVETCLSYYKA.

Residues E84, D103, L105, and D106 each coordinate Mg(2+). Substrate-binding positions include 106–109 (DGSS), N198, and K264. Position 270 (E270) interacts with Mg(2+).

The protein belongs to the FBPase class 1 family. As to quaternary structure, homotetramer. The cofactor is Mg(2+).

Its subcellular location is the cytoplasm. It carries out the reaction beta-D-fructose 1,6-bisphosphate + H2O = beta-D-fructose 6-phosphate + phosphate. Its pathway is carbohydrate biosynthesis; gluconeogenesis. The sequence is that of Fructose-1,6-bisphosphatase class 1 from Pseudoalteromonas atlantica (strain T6c / ATCC BAA-1087).